The sequence spans 568 residues: TNF receptor-associated factor 3 (568 aa).

Positions 1 to 28 (MESSKKMDSPGALQTNPPLKLHTDRSAG) are disordered. Position 9 is a phosphoserine (S9). C56 is covalently cross-linked (Glycyl cysteine thioester (Cys-Gly) (interchain with G-Cter in ubiquitin)). The segment at 68–77 (CGHRFCESCM) adopts an RING-type zinc-finger fold. A Glycyl cysteine thioester (Cys-Gly) (interchain with G-Cter in ubiquitin) cross-link involves residue C124. 2 consecutive TRAF-type zinc fingers follow at residues 135–190 (VHLK…IALQ) and 191–249 (KHED…QQIK). Residue K168 forms a Glycyl lysine isopeptide (Lys-Gly) (interchain with G-Cter in ubiquitin) linkage. The stretch at 267–338 (SNSLEKKVSL…KLKELDKEIR (72 aa)) forms a coiled coil. A Glycyl lysine isopeptide (Lys-Gly) (interchain with G-Cter in ubiquitin) cross-link involves residue K329. The interval 392–415 (LSVHDIRLADMDLRFQVLETASYN) is (Microbial infection) Interaction with glycoprotein N of Andes and New York hantaviruses. The MATH domain maps to 415 to 560 (NGVLIWKIRD…DDTIFIKVIV (146 aa)).

It belongs to the TNF receptor-associated factor family. A subfamily. Homotrimer. Heterotrimer with TRAF2 and TRAF5. Interacts with LTBR/TNFRSF3, TNFRSF4, TNFRSF5/CD40, TNFRSF8/CD30, TNFRSF13C TNFRSF17/BCMA, TLR4 and EDAR. Interacts with MAP3K5, MAP3K14, TRAIP/TRIP, TDP2/TTRAP, TANK/ITRAF and TRAF3IP1. Interaction with TNFRSF5/CD40 is modulated by TANK/ITRAF, which competes for the same binding site. Interacts with TICAM1. Interacts with TRAFD1. Interacts with OTUB1, OTUB2 and OTUD5. Interacts with RNF216, OPTN and TBK1. Identified in a complex with TRAF2, MAP3K14 and BIRC3. Interacts with BIRC2 and BIRC3. Upon exposure to bacterial lipopolysaccharide (LPS), recruited to a transient complex containing TLR4, TRAF3, TRAF6, IKBKG, MAP3K7, MYD88, TICAM1, BIRC2, BIRC3 and UBE2N. Interacts (via RING-type zinc finger domain) with SRC. Interacts with CARD14. Interacts (via MATH domain) with PTPN22; the interaction promotes TRAF3 polyubiquitination. Interacts with MAVS. Directly interacts with DDX3X; this interaction stimulates TRAF3 'Lys-63' ubiquitination. Interacts with IRF3. Interacts with IKBKE in the course of Sendai virus infection. Interacts with TRIM35. Interacts with GAPDH; promoting TRAF3 ubiquitination. Interacts with PPP3CA and PPP3CB. Interacts with ATP1B1; promoting TRAF3 ubiquitination. Interacts with RALGDS. Interacts with FBXO11. As to quaternary structure, (Microbial infection) Interacts (via N-terminus) with New York hantavirus glycoprotein N (via C-terminus); this interaction inhibits the formation of TRAF3-TBK1 complexes. In terms of assembly, (Microbial infection) Interacts with Andes hantavirus glycoprotein N (via C-terminus); this interaction inhibits the formation of TRAF3-TBK1 complexes. (Microbial infection) Interacts with Tula hantavirus glycoprotein N (via C-terminus); this interaction inhibits the formation of TRAF3-TBK1 complexes. As to quaternary structure, (Microbial infection) Interacts with Epstein-Barr virus protein LMP1. Post-translationally, undergoes 'Lys-48'-linked polyubiquitination, leading to its proteasomal degradation in response to signaling by TNFSF13B, TLR4 or through CD40. 'Lys-48'-linked polyubiquitinated form is deubiquitinated by OTUD7B, preventing TRAF3 proteolysis and over-activation of non-canonical NF-kappa-B. Undergoes 'Lys-63'-linked ubiquitination during early stages of virus infection, and 'Lys-48'-linked ubiquitination during later stages. Undergoes both 'Lys-48'-linked and 'Lys-63'-linked ubiquitination in response to TLR3 and TLR4 signaling. 'Lys-63'-linked ubiquitination can be mediated by TRIM35. Deubiquitinated by OTUB1, OTUB2 and OTUD5. Undergoes 'Lys-63'-linked deubiquitination by MYSM1 to terminate the pattern-recognition receptors/PRRs pathways. Also undergoes 'Lys-29'-linked ubiquitination on Cys-56 and Cys-124 by NEDD4L; leading to increased 'Lys-48'- and 'Lys-63'-linked ubiquitination as well as increased binding to TBK1. TLR4 signals emanating from bacteria containing vesicles trigger 'Lys-33'-linked polyubiquitination that promotes the assembly of the exocyst complex thereby connecting innate immune signaling to the cellular trafficking apparatus. Deubiquitinated by USP25 during viral infection, leading to TRAF3 stabilization and type I interferon production. Ubiquitinated at Lys-329 by the SCF(FBXL2) complex, leading to its degradation by the proteasome. 'Lys-63'-linked ubiquitination by FBXO11 in a NEDD8-dependent manner promotes the amplification of IFN-I signaling. (Microbial infection) Cleaved by enterovirus D68 protease 2A; leading to inhibition of NF-kappa-B or IFN-beta triggered by TRAF3.

The protein localises to the cytoplasm. It localises to the endosome. The protein resides in the mitochondrion. It catalyses the reaction S-ubiquitinyl-[E2 ubiquitin-conjugating enzyme]-L-cysteine + [acceptor protein]-L-lysine = [E2 ubiquitin-conjugating enzyme]-L-cysteine + N(6)-ubiquitinyl-[acceptor protein]-L-lysine.. Cytoplasmic E3 ubiquitin ligase that regulates various signaling pathways, such as the NF-kappa-B, mitogen-activated protein kinase (MAPK) and interferon regulatory factor (IRF) pathways, and thus controls a lot of biological processes in both immune and non-immune cell types. In TLR and RLR signaling pathways, acts as an E3 ubiquitin ligase promoting the synthesis of 'Lys-63'-linked polyubiquitin chains on several substrates such as ASC that lead to the activation of the type I interferon response or the inflammasome. Following the activation of certain TLRs such as TLR4, acts as a negative NF-kappa-B regulator, possibly to avoid unregulated inflammatory response, and its degradation via 'Lys-48'-linked polyubiquitination is required for MAPK activation and production of inflammatory cytokines. Alternatively, when TLR4 orchestrates bacterial expulsion, TRAF3 undergoes 'Lys-33'-linked polyubiquitination and subsequently binds to RALGDS, mobilizing the exocyst complex to rapidly expel intracellular bacteria back for clearance. Also acts as a constitutive negative regulator of the alternative NF-kappa-B pathway, which controls B-cell survival and lymphoid organ development. Required for normal antibody isotype switching from IgM to IgG. Plays a role T-cell dependent immune responses. Down-regulates proteolytic processing of NFKB2, and thereby inhibits non-canonical activation of NF-kappa-B. Promotes ubiquitination and proteasomal degradation of MAP3K14. This Homo sapiens (Human) protein is TNF receptor-associated factor 3.